Consider the following 363-residue polypeptide: Aminomethyltransferase (363 aa).

This sequence belongs to the GcvT family. As to quaternary structure, the glycine cleavage system is composed of four proteins: P, T, L and H.

The catalysed reaction is N(6)-[(R)-S(8)-aminomethyldihydrolipoyl]-L-lysyl-[protein] + (6S)-5,6,7,8-tetrahydrofolate = N(6)-[(R)-dihydrolipoyl]-L-lysyl-[protein] + (6R)-5,10-methylene-5,6,7,8-tetrahydrofolate + NH4(+). Functionally, the glycine cleavage system catalyzes the degradation of glycine. This is Aminomethyltransferase from Dechloromonas aromatica (strain RCB).